Reading from the N-terminus, the 284-residue chain is HTH-type transcriptional activator RhaR (284 aa).

Residues Asp-181 to Arg-279 enclose the HTH araC/xylS-type domain. 2 DNA-binding regions (H-T-H motif) span residues Glu-198–Thr-219 and Ile-246–Phe-269.

Binds DNA as a dimer.

Its subcellular location is the cytoplasm. Activates expression of the rhaSR operon in response to L-rhamnose. The chain is HTH-type transcriptional activator RhaR from Pectobacterium atrosepticum (strain SCRI 1043 / ATCC BAA-672) (Erwinia carotovora subsp. atroseptica).